We begin with the raw amino-acid sequence, 267 residues long: 4-hydroxy-tetrahydrodipicolinate reductase (267 aa).

An NAD(+)-binding site is contributed by 8–13 (GASGRM). Residue Arg35 coordinates NADP(+). Residues 98–100 (GTT) and 122–125 (APNM) each bind NAD(+). His155 (proton donor/acceptor) is an active-site residue. His156 contributes to the (S)-2,3,4,5-tetrahydrodipicolinate binding site. Lys159 serves as the catalytic Proton donor. A (S)-2,3,4,5-tetrahydrodipicolinate-binding site is contributed by 165–166 (GT).

Belongs to the DapB family.

It is found in the cytoplasm. The enzyme catalyses (S)-2,3,4,5-tetrahydrodipicolinate + NAD(+) + H2O = (2S,4S)-4-hydroxy-2,3,4,5-tetrahydrodipicolinate + NADH + H(+). The catalysed reaction is (S)-2,3,4,5-tetrahydrodipicolinate + NADP(+) + H2O = (2S,4S)-4-hydroxy-2,3,4,5-tetrahydrodipicolinate + NADPH + H(+). Its pathway is amino-acid biosynthesis; L-lysine biosynthesis via DAP pathway; (S)-tetrahydrodipicolinate from L-aspartate: step 4/4. Functionally, catalyzes the conversion of 4-hydroxy-tetrahydrodipicolinate (HTPA) to tetrahydrodipicolinate. This Hahella chejuensis (strain KCTC 2396) protein is 4-hydroxy-tetrahydrodipicolinate reductase.